The sequence spans 165 residues: Putative tyrosine-protein phosphatase AMV078 (165 aa).

Positions 2-149 constitute a Tyrosine-protein phosphatase domain; that stretch reads NISNINNDIY…LKFYNSYKNI (148 aa). Residue Cys94 is the Phosphocysteine intermediate of the active site.

Belongs to the protein-tyrosine phosphatase family. Non-receptor class dual specificity subfamily.

The catalysed reaction is O-phospho-L-tyrosyl-[protein] + H2O = L-tyrosyl-[protein] + phosphate. The chain is Putative tyrosine-protein phosphatase AMV078 from Amsacta moorei entomopoxvirus (AmEPV).